We begin with the raw amino-acid sequence, 66 residues long: Large ribosomal subunit protein bL35 (66 aa).

This sequence belongs to the bacterial ribosomal protein bL35 family.

The polypeptide is Large ribosomal subunit protein bL35 (Cereibacter sphaeroides (strain ATCC 17029 / ATH 2.4.9) (Rhodobacter sphaeroides)).